A 215-amino-acid polypeptide reads, in one-letter code: Peptidyl-tRNA hydrolase (215 aa).

Tyrosine 35 lines the tRNA pocket. Histidine 40 serves as the catalytic Proton acceptor. TRNA-binding residues include tyrosine 86, asparagine 88, and asparagine 134.

Belongs to the PTH family. As to quaternary structure, monomer.

It is found in the cytoplasm. It catalyses the reaction an N-acyl-L-alpha-aminoacyl-tRNA + H2O = an N-acyl-L-amino acid + a tRNA + H(+). Hydrolyzes ribosome-free peptidyl-tRNAs (with 1 or more amino acids incorporated), which drop off the ribosome during protein synthesis, or as a result of ribosome stalling. Functionally, catalyzes the release of premature peptidyl moieties from peptidyl-tRNA molecules trapped in stalled 50S ribosomal subunits, and thus maintains levels of free tRNAs and 50S ribosomes. This is Peptidyl-tRNA hydrolase from Bordetella parapertussis (strain 12822 / ATCC BAA-587 / NCTC 13253).